The chain runs to 241 residues: Xyloglucan-specific endo-beta-1,4-glucanase 1 (241 aa).

The N-terminal stretch at 1–19 is a signal peptide; that stretch reads MKGFFAGVVAAATLAVASA. Glutamate 136 is an active-site residue. Residues asparagine 174 and asparagine 190 are each glycosylated (N-linked (GlcNAc...) asparagine). The active site involves glutamate 222.

This sequence belongs to the glycosyl hydrolase 12 (cellulase H) family. Interacts with host apoplastic glucanase inhibitor GIP1.

It localises to the secreted. The protein localises to the host. It carries out the reaction xyloglucan + H2O = xyloglucan oligosaccharides.. The xyloglucanase activity is inhibited by the binding of the host apoplastic glucanase inhibitor GIP1. In terms of biological role, glycoside hydrolase that exhibits xyloglucanase activity. Acts as an important virulence factor during P.sojae infection but also acts as a pathogen-associated molecular pattern (PAMP) in soybean and solanaceous species, where it can trigger defense responses including cell death. XEG1-induced cell death can be suppressed by P.sojae RxLR effectors. The PAMP activity is independent of its xyloglucanase activity. XEG1 induces plant defense responses in a RLP kinase Serk3/Bak1-dependent manner in Nicotiana benthamiana. Moreover, the perception of XEG1 occurs independently of the perception of ethylene-inducing xylanase Eix2 in Tomato. With truncated paralog XLP1, is required to elevate apoplastic sugar during P.sojae infection. The protein is Xyloglucan-specific endo-beta-1,4-glucanase 1 of Phytophthora sojae (strain P6497) (Soybean stem and root rot agent).